The chain runs to 422 residues: MDVLGPGQGNNTTSSEGPFGTRANATGISDVTFSYQVITSLLLGTLIFCAVLGNACVVAAIALERSLQNVANYLIGSLAVTDLMVSVLVLPMAALYQVLNKWTLGQVTCDLFIALDVLCCTSSILHLCAIALDRYWAITDPIDYVNKRTPRRAAALISLTWLVGFLISIPPMLGWRTPEDRSDPDACTISKDHGYTIYSTFGAFYIPLLLMLVLYGRIFRAARFRIRKTVKKVEKKGADSRLGASPAPQRKKSANGELGSREWRQGVENKAGGVLCANGAVRQGDDGAALEVIEVHRMGNSKEHLPLPSEAGAIPCAPAFFEKKNERNAEAKRKMALARERKTVKTLGIIMGTFILCWLPFFIVALVLPFCESSCHMPTLLGAIINWLGYSNSLLNPVIYAYFNKDFQNAFKKILKCKFCRR.

The Extracellular portion of the chain corresponds to 1 to 38 (MDVLGPGQGNNTTSSEGPFGTRANATGISDVTFSYQVI). 3 N-linked (GlcNAc...) asparagine glycosylation sites follow: Asn-10, Asn-11, and Asn-24. A helical transmembrane segment spans residues 39–59 (TSLLLGTLIFCAVLGNACVVA). Residues 60–73 (AIALERSLQNVANY) lie on the Cytoplasmic side of the membrane. Residues 74–98 (LIGSLAVTDLMVSVLVLPMAALYQV) traverse the membrane as a helical segment. The Extracellular segment spans residues 99-107 (LNKWTLGQV). Residues 108-132 (TCDLFIALDVLCCTSSILHLCAIAL) form a helical membrane-spanning segment. Cys-109 and Cys-187 are oxidised to a cystine. Residues Asp-116 and Cys-120 each contribute to the serotonin site. The short motif at 133-135 (DRY) is the DRY motif; important for ligand-induced conformation changes element. Over 133–152 (DRYWAITDPIDYVNKRTPRR) the chain is Cytoplasmic. The helical transmembrane segment at 153–174 (AAALISLTWLVGFLISIPPMLG) threads the bilayer. The Extracellular portion of the chain corresponds to 175-193 (WRTPEDRSDPDACTISKDH). The chain crosses the membrane as a helical span at residues 194–216 (GYTIYSTFGAFYIPLLLMLVLYG). Over 217-346 (RIFRAARFRI…LARERKTVKT (130 aa)) the chain is Cytoplasmic. The disordered stretch occupies residues 237–262 (GADSRLGASPAPQRKKSANGELGSRE). Positions 345, 346, and 352 each coordinate 1D-myo-inositol 4-phosphate. A helical transmembrane segment spans residues 347–370 (LGIIMGTFILCWLPFFIVALVLPF). Over 371 to 378 (CESSCHMP) the chain is Extracellular. Residues 379–403 (TLLGAIINWLGYSNSLLNPVIYAYF) traverse the membrane as a helical segment. An NPxxY motif; important for ligand-induced conformation changes and signaling motif is present at residues 396 to 400 (NPVIY). 3 residues coordinate 1D-myo-inositol 4-phosphate: Phe-403, Asn-404, and Lys-405. Residues 404–422 (NKDFQNAFKKILKCKFCRR) lie on the Cytoplasmic side of the membrane.

Belongs to the G-protein coupled receptor 1 family. 5-hydroxytryptamine receptor subfamily. HTR1A sub-subfamily. As to quaternary structure, heterodimer; heterodimerizes with GPER1. Interacts with YIF1B. Interacts with GPR39 and GALR1.

The protein localises to the cell membrane. It localises to the cell projection. It is found in the dendrite. With respect to regulation, G-protein coupled receptor activity is regulated by lipids: phosphatidylinositol 4-phosphate increases HTR1A-mediated activity. Its function is as follows. G-protein coupled receptor for 5-hydroxytryptamine (serotonin). Also functions as a receptor for various drugs and psychoactive substances. Ligand binding causes a conformation change that triggers signaling via guanine nucleotide-binding proteins (G proteins) and modulates the activity of downstream effectors, such as adenylate cyclase. HTR1A is coupled to G(i)/G(o) G alpha proteins and mediates inhibitory neurotransmission: signaling inhibits adenylate cyclase activity and activates a phosphatidylinositol-calcium second messenger system that regulates the release of Ca(2+) ions from intracellular stores. Beta-arrestin family members regulate signaling by mediating both receptor desensitization and resensitization processes. In Equus caballus (Horse), this protein is 5-hydroxytryptamine receptor 1A (HTR1A).